The sequence spans 296 residues: GTPase Era (296 aa).

An Era-type G domain is found at Lys-2–Asp-171. The interval Gly-10–Ser-17 is G1. Residue Gly-10–Ser-17 coordinates GTP. A G2 region spans residues Gly-36–Asp-40. The interval Asp-57–Gly-60 is G3. GTP is bound by residues Asp-57 to Ile-61 and Asn-120 to Asp-123. Residues Asn-120–Asp-123 form a G4 region. The segment at Ala-150–Gly-152 is G5. A KH type-2 domain is found at Thr-202 to Asp-279.

Belongs to the TRAFAC class TrmE-Era-EngA-EngB-Septin-like GTPase superfamily. Era GTPase family. In terms of assembly, monomer.

Its subcellular location is the cytoplasm. It is found in the cell inner membrane. In terms of biological role, an essential GTPase that binds both GDP and GTP, with rapid nucleotide exchange. Plays a role in 16S rRNA processing and 30S ribosomal subunit biogenesis and possibly also in cell cycle regulation and energy metabolism. In Fusobacterium nucleatum subsp. nucleatum (strain ATCC 25586 / DSM 15643 / BCRC 10681 / CIP 101130 / JCM 8532 / KCTC 2640 / LMG 13131 / VPI 4355), this protein is GTPase Era.